Reading from the N-terminus, the 43-residue chain is Protein PsbN (43 aa).

Residues 7–27 form a helical membrane-spanning segment; sequence LSISIGVMVVAITGFSIYTAF.

This sequence belongs to the PsbN family.

The protein resides in the cellular thylakoid membrane. Functionally, may play a role in photosystem I and II biogenesis. The polypeptide is Protein PsbN (Trichodesmium erythraeum (strain IMS101)).